Reading from the N-terminus, the 321-residue chain is Peroxidase 70 (321 aa).

Residues 1 to 25 form the signal peptide; it reads MASSSFTSLSVMVLLCLAAAAVASA. Gln-26 is modified (pyrrolidone carboxylic acid). 4 disulfides stabilise this stretch: Cys-36/Cys-116, Cys-69/Cys-74, Cys-122/Cys-317, and Cys-201/Cys-226. His-67 acts as the Proton acceptor in catalysis. The Ca(2+) site is built by Asp-68, Val-71, Gly-73, Asp-75, and Ser-77. An N-linked (GlcNAc...) asparagine glycan is attached at Asn-81. Position 164 (Pro-164) interacts with substrate. Asn-172 carries N-linked (GlcNAc...) asparagine glycosylation. His-194 contributes to the heme b binding site. Thr-195 lines the Ca(2+) pocket. Asn-210 carries an N-linked (GlcNAc...) asparagine glycan. Residues Asp-241, Thr-244, and Asp-249 each contribute to the Ca(2+) site.

This sequence belongs to the peroxidase family. Classical plant (class III) peroxidase subfamily. Heme b serves as cofactor. Ca(2+) is required as a cofactor.

It is found in the secreted. The catalysed reaction is 2 a phenolic donor + H2O2 = 2 a phenolic radical donor + 2 H2O. Its function is as follows. Removal of H(2)O(2), oxidation of toxic reductants, biosynthesis and degradation of lignin, suberization, auxin catabolism, response to environmental stresses such as wounding, pathogen attack and oxidative stress. These functions might be dependent on each isozyme/isoform in each plant tissue. The polypeptide is Peroxidase 70 (PER70) (Zea mays (Maize)).